The chain runs to 290 residues: L-proline cis-3-hydroxylase 2 (290 aa).

H107, D109, and H158 together coordinate Fe cation. Residue R168 participates in 2-oxoglutarate binding.

It belongs to the L-proline cis-4-/cis-3-hydroxylase family. Homodimer. It depends on Fe(2+) as a cofactor.

It catalyses the reaction L-proline + 2-oxoglutarate + O2 = cis-3-hydroxy-L-proline + succinate + CO2. Its activity is regulated as follows. Inhibited by metal ions such as Co(2+), Zn(2+), Ni(2+) or Cu(2+). Is also inhibited by EDTA in vitro. Its function is as follows. Dioxygenase that catalyzes the 2-oxoglutarate-dependent selective hydroxylation of free L-proline to cis-3-hydroxy-L-proline (cis-3-Hyp). The polypeptide is L-proline cis-3-hydroxylase 2 (Streptomyces sp).